The primary structure comprises 483 residues: Zinc metalloproteinase/disintegrin VMP-II (483 aa).

The N-terminal stretch at 1 to 20 is a signal peptide; sequence MIQVLLVTLCLAAFPYQGNS. A propeptide spanning residues 21–191 is cleaved from the precursor; sequence IILESGNVND…KASQLNLTPE (171 aa). The 197-residue stretch at 198 to 394 folds into the Peptidase M12B domain; the sequence is RYIELVVVAD…HNPQCMLNEP (197 aa). Positions 201 and 285 each coordinate Ca(2+). Disulfide bonds link cysteine 309–cysteine 389, cysteine 349–cysteine 373, and cysteine 351–cysteine 356. A Zn(2+)-binding site is contributed by histidine 334. Glutamate 335 is an active-site residue. 2 residues coordinate Zn(2+): histidine 338 and histidine 344. Residues cysteine 389 and asparagine 392 each coordinate Ca(2+). The propeptide occupies 395–414; sequence LRTDIVSTPVSGNELWETGE. The Disintegrin domain maps to 402–483; that stretch reads TPVSGNELWE…AGCPRNPFHA (82 aa). Disulfide bonds link cysteine 425-cysteine 448, cysteine 439-cysteine 445, cysteine 444-cysteine 469, and cysteine 457-cysteine 476. The Cell attachment site; atypical (KGD) motif lies at 461 to 463; the sequence is KGD.

Belongs to the venom metalloproteinase (M12B) family. P-II subfamily. P-IIe sub-subfamily. In terms of assembly, heterodimer; disulfide-linked (disintegrin). The cofactor is Zn(2+). In terms of tissue distribution, expressed by the venom gland.

It localises to the secreted. Inhibited by EDTA and 1,10-phenanthroline, but not by PMSF. Has fibrinolytic activity. The recombinant enzyme cleaves both alpha- (FGA) and beta-chains (FGB) of fibrinogen, but not the gamma-chain. The recombinant protein does not produce hemorrhage in mice and does not have effect on ADP- or collagen-stimulated platelet aggregation. In terms of biological role, inhibits platelet aggregation induced by ADP, thrombin, platelet-activating factor and collagen. Acts by inhibiting fibrinogen interaction with platelet receptors GPIIb/GPIIIa (ITGA2B/ITGB3). The sequence is that of Zinc metalloproteinase/disintegrin VMP-II from Agkistrodon piscivorus leucostoma (Western cottonmouth).